The following is a 338-amino-acid chain: Lipoyl synthase (338 aa).

Residues 1-24 are disordered; sequence MTTVQEAVPNLIPTQDATPRPAPK. Positions 84, 89, 95, 110, 114, 117, and 324 each coordinate [4Fe-4S] cluster. The region spanning 96 to 313 is the Radical SAM core domain; sequence FSGGTATFMI…AEEGYKMGFK (218 aa).

The protein belongs to the radical SAM superfamily. Lipoyl synthase family. [4Fe-4S] cluster is required as a cofactor.

It localises to the cytoplasm. It catalyses the reaction [[Fe-S] cluster scaffold protein carrying a second [4Fe-4S](2+) cluster] + N(6)-octanoyl-L-lysyl-[protein] + 2 oxidized [2Fe-2S]-[ferredoxin] + 2 S-adenosyl-L-methionine + 4 H(+) = [[Fe-S] cluster scaffold protein] + N(6)-[(R)-dihydrolipoyl]-L-lysyl-[protein] + 4 Fe(3+) + 2 hydrogen sulfide + 2 5'-deoxyadenosine + 2 L-methionine + 2 reduced [2Fe-2S]-[ferredoxin]. Its pathway is protein modification; protein lipoylation via endogenous pathway; protein N(6)-(lipoyl)lysine from octanoyl-[acyl-carrier-protein]: step 2/2. In terms of biological role, catalyzes the radical-mediated insertion of two sulfur atoms into the C-6 and C-8 positions of the octanoyl moiety bound to the lipoyl domains of lipoate-dependent enzymes, thereby converting the octanoylated domains into lipoylated derivatives. This chain is Lipoyl synthase, found in Pseudomonas putida (strain W619).